The sequence spans 145 residues: Large ribosomal subunit protein uL13 (145 aa).

This sequence belongs to the universal ribosomal protein uL13 family. As to quaternary structure, part of the 50S ribosomal subunit.

Its function is as follows. This protein is one of the early assembly proteins of the 50S ribosomal subunit, although it is not seen to bind rRNA by itself. It is important during the early stages of 50S assembly. The sequence is that of Large ribosomal subunit protein uL13 from Halobacterium salinarum (strain ATCC 700922 / JCM 11081 / NRC-1) (Halobacterium halobium).